Consider the following 715-residue polypeptide: Putative macrophage stimulating 1-like protein (715 aa).

A signal peptide spans 1–20 (MAPAPVTLLAPGAASSMSCS). Positions 21–110 (QPGQRSPSND…GRCDLFQEKG (90 aa)) constitute a PAN domain. 4 consecutive Kringle domains span residues 63 to 156 (GRCG…IKSC), 160 to 238 (ACVW…LPRC), 252 to 345 (SCFR…IRRC), and 353 to 464 (DCYH…LRRC). Cystine bridges form between cysteine 127–cysteine 151, cysteine 161–cysteine 238, cysteine 182–cysteine 221, cysteine 210–cysteine 233, cysteine 253–cysteine 345, cysteine 316–cysteine 339, cysteine 354–cysteine 464, cysteine 375–cysteine 447, cysteine 511–cysteine 527, cysteine 606–cysteine 671, cysteine 636–cysteine 650, and cysteine 661–cysteine 689. Residues 488 to 713 (VAGGHPGNSP…FVDWIHKVMR (226 aa)) form the Peptidase S1 domain.

Belongs to the peptidase S1 family. Plasminogen subfamily.

It localises to the secreted. The polypeptide is Putative macrophage stimulating 1-like protein (MST1L) (Homo sapiens (Human)).